Reading from the N-terminus, the 149-residue chain is Arginine repressor (149 aa).

Belongs to the ArgR family.

The protein localises to the cytoplasm. It participates in amino-acid biosynthesis; L-arginine biosynthesis [regulation]. Its function is as follows. Regulates arginine biosynthesis genes. This Chlorobaculum parvum (strain DSM 263 / NCIMB 8327) (Chlorobium vibrioforme subsp. thiosulfatophilum) protein is Arginine repressor.